The primary structure comprises 478 residues: Aspartyl/glutamyl-tRNA(Asn/Gln) amidotransferase subunit B (478 aa).

Belongs to the GatB/GatE family. GatB subfamily. Heterotrimer of A, B and C subunits.

The enzyme catalyses L-glutamyl-tRNA(Gln) + L-glutamine + ATP + H2O = L-glutaminyl-tRNA(Gln) + L-glutamate + ADP + phosphate + H(+). It catalyses the reaction L-aspartyl-tRNA(Asn) + L-glutamine + ATP + H2O = L-asparaginyl-tRNA(Asn) + L-glutamate + ADP + phosphate + 2 H(+). Functionally, allows the formation of correctly charged Asn-tRNA(Asn) or Gln-tRNA(Gln) through the transamidation of misacylated Asp-tRNA(Asn) or Glu-tRNA(Gln) in organisms which lack either or both of asparaginyl-tRNA or glutaminyl-tRNA synthetases. The reaction takes place in the presence of glutamine and ATP through an activated phospho-Asp-tRNA(Asn) or phospho-Glu-tRNA(Gln). This Alkalilimnicola ehrlichii (strain ATCC BAA-1101 / DSM 17681 / MLHE-1) protein is Aspartyl/glutamyl-tRNA(Asn/Gln) amidotransferase subunit B.